Here is a 451-residue protein sequence, read N- to C-terminus: UBP1-associated protein 2B (451 aa).

The tract at residues 1–86 is disordered; it reads MTKKRKLESE…GNEDDDEEEP (86 aa). 2 stretches are compositionally biased toward basic and acidic residues: residues 25 to 38 and 49 to 63; these read CEKEDPEIRNVDNQ and DTLKEMHEEEAKGED. Residues 67-77 are compositionally biased toward polar residues; sequence AETSSGSGNQG. RRM domains are found at residues 128-236 and 227-314; these read RKIF…NVSA and RKIY…QHQH. 2 disordered regions span residues 302-335 and 423-451; these read ANDGPKQVKQHQHNHNSHNQNSRYQRNDNNGYGA and GGYQTQQPGQGGAGRGQHGAGYGGPYMGR. Residues 431–451 are compositionally biased toward gly residues; it reads GQGGAGRGQHGAGYGGPYMGR.

In terms of tissue distribution, expressed in shoot meristem and flowers.

It localises to the nucleus. Its function is as follows. Heterogeneous nuclear ribonucleoprotein (hnRNP)-like protein that acts as a component of a complex regulating the turnover of mRNAs in the nucleus. Binds with high affinity to RNA molecules that contain U-rich sequences in 3'-UTRs. May function in complex with UBP1 and contribute to the stabilization of mRNAs in the nucleus. The chain is UBP1-associated protein 2B (UBA2B) from Arabidopsis thaliana (Mouse-ear cress).